Reading from the N-terminus, the 277-residue chain is Phosphate import ATP-binding protein PstB (277 aa).

In terms of domain architecture, ABC transporter spans 31–272; that stretch reads LEVPGLNLFY…PAKKQTEDYI (242 aa). ATP is bound at residue 63–70; sequence GPSGCGKS.

It belongs to the ABC transporter superfamily. Phosphate importer (TC 3.A.1.7) family. In terms of assembly, the complex is composed of two ATP-binding proteins (PstB), two transmembrane proteins (PstC and PstA) (Potential). PstS is missing in this species.

The protein resides in the cell inner membrane. The catalysed reaction is phosphate(out) + ATP + H2O = ADP + 2 phosphate(in) + H(+). Part of the ABC transporter complex PstSACB involved in phosphate import. Responsible for energy coupling to the transport system. This is Phosphate import ATP-binding protein PstB from Pseudomonas aeruginosa (strain ATCC 15692 / DSM 22644 / CIP 104116 / JCM 14847 / LMG 12228 / 1C / PRS 101 / PAO1).